The following is a 564-amino-acid chain: MEQLLDNRYRVIKTLGSGGFGETFLAEDSQMPSNRRCVVKQLRPIHNNPQIYQLVQERFQREAAILEDLGSYSGQIPTLYAYFQSNTQFYVVQEWVEGDTLTAKLKQQGVLSESAVRDILINLLPVLEYVHSKRIIHRDIKPDNIILRHRDGKPVLIDFGAVRESMGTVINSQGNPTSSIVIGTPGYMPSEQAAGRPVYSSDLYSLGLTAIYLLTGKQPQELETEPHSGEIIWHRYALNISPTLAAVIDRAIAYHPRERFTTAREMLEALQLGVVSYPPTVPYQQPQSSPTVPYQQPPVVTTPPFATQTNTVAVSPGTAPTPQPINHNNSNKGILMGSLIAGGLIGASVVIGFALTRPNQPVTQTTSLPSETTISNNDTPTVEPSPTDTPETPISQTVTQDPTPQASVRFPINSRPFTTPIDSKPRNTTEPTTSVPQPTTPSEPQITTPVEATDRPSPEQAVQNYYETINQGEYSTAWNLLASSFQNNRKLHPRGYDSYLDWWGGQVENVDVEQVSLLKANADTATVNARLRYFMKSGRQSSSSVRFSLVWDADNNRWVVSGAR.

One can recognise a Protein kinase domain in the interval 9 to 271 (YRVIKTLGSG…TAREMLEALQ (263 aa)). ATP-binding positions include 15–23 (LGSGGFGET) and Lys40. Catalysis depends on Asp139, which acts as the Proton acceptor. Residues 360-406 (QPVTQTTSLPSETTISNNDTPTVEPSPTDTPETPISQTVTQDPTPQA) show a composition bias toward polar residues. The tract at residues 360–458 (QPVTQTTSLP…PVEATDRPSP (99 aa)) is disordered. Over residues 428–445 (TTEPTTSVPQPTTPSEPQ) the composition is skewed to low complexity.

Belongs to the protein kinase superfamily. Ser/Thr protein kinase family.

It catalyses the reaction L-seryl-[protein] + ATP = O-phospho-L-seryl-[protein] + ADP + H(+). The catalysed reaction is L-threonyl-[protein] + ATP = O-phospho-L-threonyl-[protein] + ADP + H(+). In terms of biological role, probably required for both normal cellular growth and differentiation. Inactivation of pknA leads to colonies that appear light green and rough in the absence of combined nitrogen. The chain is Serine/threonine-protein kinase PknA (pknA) from Nostoc sp. (strain PCC 7120 / SAG 25.82 / UTEX 2576).